The primary structure comprises 430 residues: Tyrosine--tRNA ligase (430 aa).

Tyrosine 32 is a binding site for L-tyrosine. The 'HIGH' region motif lies at 37–46 (PTADSLHIGH). Tyrosine 172 and glutamine 176 together coordinate L-tyrosine. Positions 232–236 (KFGKT) match the 'KMSKS' region motif. Lysine 235 serves as a coordination point for ATP. The S4 RNA-binding domain occupies 362 to 430 (ISLVDLLADA…KKSYYLIIVE (69 aa)).

It belongs to the class-I aminoacyl-tRNA synthetase family. TyrS type 1 subfamily. In terms of assembly, homodimer.

It is found in the cytoplasm. It carries out the reaction tRNA(Tyr) + L-tyrosine + ATP = L-tyrosyl-tRNA(Tyr) + AMP + diphosphate + H(+). Catalyzes the attachment of tyrosine to tRNA(Tyr) in a two-step reaction: tyrosine is first activated by ATP to form Tyr-AMP and then transferred to the acceptor end of tRNA(Tyr). In Porphyromonas gingivalis (strain ATCC BAA-308 / W83), this protein is Tyrosine--tRNA ligase.